A 163-amino-acid polypeptide reads, in one-letter code: ATP synthase subunit b (163 aa).

The helical transmembrane segment at 10–29 (ALYQLLAFSVLLFFLSKFAL) threads the bilayer.

This sequence belongs to the ATPase B chain family. F-type ATPases have 2 components, F(1) - the catalytic core - and F(0) - the membrane proton channel. F(1) has five subunits: alpha(3), beta(3), gamma(1), delta(1), epsilon(1). F(0) has three main subunits: a(1), b(2) and c(10-14). The alpha and beta chains form an alternating ring which encloses part of the gamma chain. F(1) is attached to F(0) by a central stalk formed by the gamma and epsilon chains, while a peripheral stalk is formed by the delta and b chains.

It localises to the cell membrane. Functionally, f(1)F(0) ATP synthase produces ATP from ADP in the presence of a proton or sodium gradient. F-type ATPases consist of two structural domains, F(1) containing the extramembraneous catalytic core and F(0) containing the membrane proton channel, linked together by a central stalk and a peripheral stalk. During catalysis, ATP synthesis in the catalytic domain of F(1) is coupled via a rotary mechanism of the central stalk subunits to proton translocation. In terms of biological role, component of the F(0) channel, it forms part of the peripheral stalk, linking F(1) to F(0). The protein is ATP synthase subunit b of Alkalihalophilus pseudofirmus (strain ATCC BAA-2126 / JCM 17055 / OF4) (Bacillus pseudofirmus).